Here is a 750-residue protein sequence, read N- to C-terminus: Photosystem I P700 chlorophyll a apoprotein A1 (750 aa).

The next 8 membrane-spanning stretches (helical) occupy residues 70–93 (VFSA…FHGA), 156–179 (LYCT…FHYH), 195–219 (LNHH…HVSL), 291–309 (IAHH…GHMY), 346–369 (WHAQ…HHMY), 385–411 (LSLF…IFMV), 433–455 (AIIS…LYIH), and 531–549 (FLVH…LILL). Residues C573 and C582 each coordinate [4Fe-4S] cluster. 2 helical membrane passes run 589-610 (HVFL…HFSW) and 664-686 (LSAY…MFLF). Position 675 (H675) interacts with chlorophyll a'. 2 residues coordinate chlorophyll a: M683 and Y691. Phylloquinone is bound at residue W692. Residues 724–744 (AVGVTHYLLGGIATTWAFFLA) traverse the membrane as a helical segment.

It belongs to the PsaA/PsaB family. The PsaA/B heterodimer binds the P700 chlorophyll special pair and subsequent electron acceptors. PSI consists of a core antenna complex that captures photons, and an electron transfer chain that converts photonic excitation into a charge separation. The eukaryotic PSI reaction center is composed of at least 11 subunits. P700 is a chlorophyll a/chlorophyll a' dimer, A0 is one or more chlorophyll a, A1 is one or both phylloquinones and FX is a shared 4Fe-4S iron-sulfur center. serves as cofactor.

The protein resides in the plastid. The protein localises to the chloroplast thylakoid membrane. It carries out the reaction reduced [plastocyanin] + hnu + oxidized [2Fe-2S]-[ferredoxin] = oxidized [plastocyanin] + reduced [2Fe-2S]-[ferredoxin]. In terms of biological role, psaA and PsaB bind P700, the primary electron donor of photosystem I (PSI), as well as the electron acceptors A0, A1 and FX. PSI is a plastocyanin-ferredoxin oxidoreductase, converting photonic excitation into a charge separation, which transfers an electron from the donor P700 chlorophyll pair to the spectroscopically characterized acceptors A0, A1, FX, FA and FB in turn. Oxidized P700 is reduced on the lumenal side of the thylakoid membrane by plastocyanin. The protein is Photosystem I P700 chlorophyll a apoprotein A1 of Nicotiana sylvestris (Wood tobacco).